The sequence spans 283 residues: Pantothenate synthetase (283 aa).

30-37 (MGNLHDGH) contacts ATP. The active-site Proton donor is the His-37. Residue Gln-61 coordinates (R)-pantoate. Gln-61 serves as a coordination point for beta-alanine. Residue 149-152 (GEKD) coordinates ATP. Position 155 (Gln-155) interacts with (R)-pantoate. Position 186-189 (186-189 (LSSR)) interacts with ATP.

The protein belongs to the pantothenate synthetase family. In terms of assembly, homodimer.

Its subcellular location is the cytoplasm. It catalyses the reaction (R)-pantoate + beta-alanine + ATP = (R)-pantothenate + AMP + diphosphate + H(+). It functions in the pathway cofactor biosynthesis; (R)-pantothenate biosynthesis; (R)-pantothenate from (R)-pantoate and beta-alanine: step 1/1. Catalyzes the condensation of pantoate with beta-alanine in an ATP-dependent reaction via a pantoyl-adenylate intermediate. This chain is Pantothenate synthetase, found in Escherichia coli O6:K15:H31 (strain 536 / UPEC).